Here is a 291-residue protein sequence, read N- to C-terminus: Porphobilinogen deaminase (291 aa).

The residue at position 237 (Cys-237) is an S-(dipyrrolylmethanemethyl)cysteine.

Belongs to the HMBS family. Monomer. It depends on dipyrromethane as a cofactor.

It catalyses the reaction 4 porphobilinogen + H2O = hydroxymethylbilane + 4 NH4(+). The protein operates within porphyrin-containing compound metabolism; protoporphyrin-IX biosynthesis; coproporphyrinogen-III from 5-aminolevulinate: step 2/4. Tetrapolymerization of the monopyrrole PBG into the hydroxymethylbilane pre-uroporphyrinogen in several discrete steps. The sequence is that of Porphobilinogen deaminase from Clostridium perfringens (strain SM101 / Type A).